A 444-amino-acid polypeptide reads, in one-letter code: Homogentisate 1,2-dioxygenase (444 aa).

Histidine 298 functions as the Proton acceptor in the catalytic mechanism. The Fe cation site is built by histidine 341 and glutamate 347. Tyrosine 356 and histidine 377 together coordinate homogentisate. Histidine 377 contributes to the Fe cation binding site.

The protein belongs to the homogentisate dioxygenase family. Hexamer; dimer of trimers. Requires Fe cation as cofactor.

It catalyses the reaction homogentisate + O2 = 4-maleylacetoacetate + H(+). It functions in the pathway amino-acid degradation; L-phenylalanine degradation; acetoacetate and fumarate from L-phenylalanine: step 4/6. In terms of biological role, involved in the catabolism of homogentisate (2,5-dihydroxyphenylacetate or 2,5-OH-PhAc), a central intermediate in the degradation of phenylalanine and tyrosine. Catalyzes the oxidative ring cleavage of the aromatic ring of homogentisate to yield maleylacetoacetate. In Burkholderia orbicola (strain AU 1054), this protein is Homogentisate 1,2-dioxygenase.